The following is a 395-amino-acid chain: Putative nickel insertion protein (395 aa).

Belongs to the LarC family.

This Archaeoglobus fulgidus (strain ATCC 49558 / DSM 4304 / JCM 9628 / NBRC 100126 / VC-16) protein is Putative nickel insertion protein.